Consider the following 211-residue polypeptide: Peptidyl-prolyl cis-trans isomerase FKBP14 (211 aa).

The signal sequence occupies residues 1-19 (MRFFLWNAILALWVTVLSG). Cysteines 38 and 96 form a disulfide. A PPIase FKBP-type domain is found at 45 to 135 (GDLMLVHYEG…IFNIDLLEIR (91 aa)). Residues 135 to 170 (RNGPRSHESFQEMDLNDDWRLSKHEVKVYLQKEFEK) enclose the EF-hand 1 domain. Ca(2+) is bound by residues Asp-148, Asn-150, Asp-152, Arg-154, and Glu-159. N-linked (GlcNAc...) asparagine glycosylation occurs at Asn-176. An EF-hand 2 domain is found at 179–211 (HHDALVEDIFDKEDEDKDGFISAREFTYVHDEL). Ca(2+) is bound by residues Asp-192, Asp-194, Asp-196, and Glu-203. Positions 208 to 211 (HDEL) match the Prevents secretion from ER motif.

In terms of assembly, monomer. Homodimer. Interacts with type III, type IV and type X collagens.

The protein localises to the endoplasmic reticulum lumen. It catalyses the reaction [protein]-peptidylproline (omega=180) = [protein]-peptidylproline (omega=0). Inhibited by tacrolimus/FK506. Its function is as follows. PPIase which accelerates the folding of proteins during protein synthesis. Has a preference for substrates containing 4-hydroxylproline modifications, including type III collagen. May also target type VI and type X collagens. The polypeptide is Peptidyl-prolyl cis-trans isomerase FKBP14 (Fkbp14) (Mus musculus (Mouse)).